Here is a 291-residue protein sequence, read N- to C-terminus: MDIFSEILPLREQIKAWKREGKRIAFVPTMGNLHEGHLTLIRTAREHADIVVASIFVNPMQFNNADDLTNYPRTLDEDVEKLTAENVDLVFTPTPEIMYPEGLEKQTTVDVPVISTILEGASRPGHFKGVSTVVNKLFNIVQPDVACFGEKDFQQLALIRQMVIDMALDVEIVGVPTVREMDGLAMSSRNNLLTLNERQRAPVLARTMRWISSQMRGGRNDYLSLIEDASDQLRAADLQPDEIFIRDARTLQEPTEETTQAIILMAAFLGQVRLIDNLVVELAAASNDEEE.

30–37 serves as a coordination point for ATP; the sequence is MGNLHEGH. The active-site Proton donor is the His37. Gln61 contacts (R)-pantoate. Residue Gln61 participates in beta-alanine binding. 149 to 152 contacts ATP; the sequence is GEKD. Gln155 provides a ligand contact to (R)-pantoate. ATP-binding positions include Val178 and 186 to 189; that span reads MSSR.

Belongs to the pantothenate synthetase family. As to quaternary structure, homodimer.

It is found in the cytoplasm. It catalyses the reaction (R)-pantoate + beta-alanine + ATP = (R)-pantothenate + AMP + diphosphate + H(+). It functions in the pathway cofactor biosynthesis; (R)-pantothenate biosynthesis; (R)-pantothenate from (R)-pantoate and beta-alanine: step 1/1. Its function is as follows. Catalyzes the condensation of pantoate with beta-alanine in an ATP-dependent reaction via a pantoyl-adenylate intermediate. The chain is Pantothenate synthetase from Aliivibrio fischeri (strain ATCC 700601 / ES114) (Vibrio fischeri).